Here is a 414-residue protein sequence, read N- to C-terminus: MADLHLAKSITLRCGLTLPNRLAKTAIAESIAPRNMLIDEGFHRVYAPWAEGGWGMVLTGHVQVDSMHLGTHTDPAVNADFSDDQIVGSWKVWAAVCNRHGTPTIMQLNHPGRQAPIGAGTSGVFAKNISASAVPMDIGSGLLARAVSKIVFGTPREMTVDDIGKLVRQFARAARLASQSGFAGVELHASHGYLLAQFLSAATNRRKDAYGGTPANRARIVVEIIKAVRAEVPASFCVGIILTAVHGSASTEEFQSFIEQAQLICDAGVDFIEISGGTFETPSMFIGPEKRGKAYDWDNQEAFFLDFAQAIRPHLGTVPLLLTGGFRSCHAMEAAVKRGDCDMIGLARPAVVNPLLPKTVVFNPEVNKSGDTKLHATRTPAPWYIKLFGITALNVHMDNAWYVGRLQTLAKTGR.

FMN contacts are provided by residues 25–28 (TAIA) and Gln107. A substrate-binding site is contributed by 188 to 191 (HASH). 347–348 (AR) is a binding site for FMN.

The protein belongs to the NADH:flavin oxidoreductase/NADH oxidase family.

The catalysed reaction is 8-epi-ilicicolin H = ilicicolin H. Its pathway is mycotoxin biosynthesis. In terms of biological role, NADH-dependent flavin oxidoreductase; part of the gene cluster that mediates the biosynthesis of ilicicolin H, a 4-hydroxy-2-pyridonealkaloid that has potent and broad antifungal activities by inhibiting the mitochondrial respiration chain. IccE acts as an epimerase and catalyzes the conversion of 8-epi-ilicicolin H into the final product ilicicolin H. The biosynthesis of ilicicolin H starts with formation of the tetramic acid by the hybrid PKS-NRPS synthetase iccA with the partnering trans-enoyl reductase iccB since iccA lacks a designated enoylreductase (ER) domain. The cytochrome P450 monooxygenase iccC then catalyzes the ring expansion of the tetramate to the acyclic 2-pyridone. The pericyclase iccD further converts the acyclic 2-pyridone into 8-epi-ilicicolin H. Finally, the epimerase iccE converts 8-epi-ilicicolin H into ilicicolin H via epimerization. IccA to iccE are sufficient for ilicicolin H biosynthesis and the roles of the remaining enzymes, iccF, iccG and iccH within the pathway have still to be determined. The sequence is that of NADH-dependent flavin oxidoreductase iccE from Talaromyces variabilis (Penicillium variabile).